The primary structure comprises 245 residues: Phosphoribosylaminoimidazole-succinocarboxamide synthase (245 aa).

This sequence belongs to the SAICAR synthetase family.

The enzyme catalyses 5-amino-1-(5-phospho-D-ribosyl)imidazole-4-carboxylate + L-aspartate + ATP = (2S)-2-[5-amino-1-(5-phospho-beta-D-ribosyl)imidazole-4-carboxamido]succinate + ADP + phosphate + 2 H(+). The protein operates within purine metabolism; IMP biosynthesis via de novo pathway; 5-amino-1-(5-phospho-D-ribosyl)imidazole-4-carboxamide from 5-amino-1-(5-phospho-D-ribosyl)imidazole-4-carboxylate: step 1/2. The polypeptide is Phosphoribosylaminoimidazole-succinocarboxamide synthase (Nostoc sp. (strain PCC 7120 / SAG 25.82 / UTEX 2576)).